The primary structure comprises 48 residues: Delta-actitoxin-Bgr2b (48 aa).

3 cysteine pairs are disulfide-bonded: Cys-4-Cys-45, Cys-6-Cys-35, and Cys-28-Cys-46.

Belongs to the sea anemone sodium channel inhibitory toxin family. Type I subfamily.

Its subcellular location is the secreted. It localises to the nematocyst. In terms of biological role, binds voltage-dependently at site 3 of sodium channels (Nav) and inhibits the inactivation of the activated channels, thereby blocking neuronal transmission. Has effect on SCN4A/SCN1B, and SCN5A/SCN1B, has no effect on SCN2A/SCN1B, and SCN10A/SCN1B. Possesses the highest efficacy for the insect sodium channel para/tipE. Also interacts with sodium channels in cardiac cells. Shows lethality to crabs. The sequence is that of Delta-actitoxin-Bgr2b from Bunodosoma granuliferum (Red warty sea anemone).